A 352-amino-acid polypeptide reads, in one-letter code: Adenosine deaminase (352 aa).

Ala-2 is modified (N-acetylalanine). The Zn(2+) site is built by His-15 and His-17. Residues His-17 and Asp-19 each contribute to the substrate site. Lys-54 bears the N6-acetyllysine mark. Substrate is bound at residue Gly-184. His-214 contacts Zn(2+). The active-site Proton donor is Glu-217. Lys-232 is modified (N6-acetyllysine). Asp-295 serves as a coordination point for Zn(2+). A substrate-binding site is contributed by Asp-296.

This sequence belongs to the metallo-dependent hydrolases superfamily. Adenosine and AMP deaminases family. In terms of assembly, interacts with DPP4 (via extracellular domain). Interacts with PLG (via Kringle 4 domain); the interaction stimulates PLG activation when in complex with DPP4. Zn(2+) serves as cofactor. In terms of tissue distribution, detected in brain and liver (at protein level).

It is found in the cell membrane. It localises to the cell junction. The protein resides in the cytoplasmic vesicle lumen. The protein localises to the cytoplasm. Its subcellular location is the lysosome. The enzyme catalyses adenosine + H2O + H(+) = inosine + NH4(+). It catalyses the reaction 2'-deoxyadenosine + H2O + H(+) = 2'-deoxyinosine + NH4(+). The catalysed reaction is cordycepin + H2O + H(+) = 3'-deoxyinosine + NH4(+). Its function is as follows. Catalyzes the hydrolytic deamination of adenosine and 2-deoxyadenosine. Plays an important role in purine metabolism and in adenosine homeostasis. Modulates signaling by extracellular adenosine, and so contributes indirectly to cellular signaling events. Acts as a positive regulator of T-cell coactivation, by binding DPP4. Its interaction with DPP4 regulates lymphocyte-epithelial cell adhesion. Enhances dendritic cell immunogenicity by affecting dendritic cell costimulatory molecule expression and cytokines and chemokines secretion. Enhances CD4+ T-cell differentiation and proliferation. Acts as a positive modulator of adenosine receptors ADORA1 and ADORA2A, by enhancing their ligand affinity via conformational change. Stimulates plasminogen activation. Plays a role in male fertility. Plays a protective role in early postimplantation embryonic development. Also responsible for the deamination of cordycepin (3'-deoxyadenosine), a fungal natural product that shows antitumor, antibacterial, antifungal, antivirus, and immune regulation properties. In Rattus norvegicus (Rat), this protein is Adenosine deaminase (Ada).